A 127-amino-acid polypeptide reads, in one-letter code: Modulator protein MzrA (127 aa).

The Cytoplasmic portion of the chain corresponds to 1 to 10 (MQIPRMSLRQ). Residues 11–31 (LAWSGAVLLLVGTLLLAWSAV) traverse the membrane as a helical segment. The Periplasmic portion of the chain corresponds to 32–127 (RQQESTLAIR…RLRDNSHRFG (96 aa)).

This sequence belongs to the MzrA family. Interacts with EnvZ.

The protein resides in the cell inner membrane. Its function is as follows. Modulates the activity of the EnvZ/OmpR two-component regulatory system, probably by directly modulating EnvZ enzymatic activity and increasing stability of phosphorylated OmpR. Links the two-component systems CpxA/CpxR and EnvZ/OmpR. The polypeptide is Modulator protein MzrA (Escherichia coli (strain K12)).